A 394-amino-acid chain; its full sequence is Protein LAX PANICLE 2 (394 aa).

The segment at 1–193 is disordered; the sequence is MVPARSLAHP…PTPRHHHHDV (193 aa). Over residues 8–20 the composition is skewed to basic residues; that stretch reads AHPHPHLVRRRRD. A compositionally biased stretch (basic and acidic residues) spans 60–84; the sequence is QHDPPKQPPPREADDDHHRIQEREP. 3 stretches are compositionally biased toward low complexity: residues 90–101, 119–131, and 146–155; these read TTTRNQRLQLQL, GTSG…SSSN, and GPASPGASAG. Positions 170–185 are enriched in pro residues; that stretch reads APQPPTPTPTPTPTPT.

As to quaternary structure, interacts with LAX1.

It is found in the nucleus. Its function is as follows. Involved in the regulation of shoot branching by controlling axillary meristem (AM) formation. Functions in association with LAX1 to regulate the process of AM formation. Possesses transactivation activity in yeast. The protein is Protein LAX PANICLE 2 of Oryza sativa subsp. japonica (Rice).